A 191-amino-acid chain; its full sequence is uncharacterized protein (191 aa).

It to E.coli YecM.

This is an uncharacterized protein from Haemophilus influenzae (strain ATCC 51907 / DSM 11121 / KW20 / Rd).